The chain runs to 233 residues: Ribose-5-phosphate isomerase A (233 aa).

Residues 28–31 (SGST), 83–86 (DGAD), and 96–99 (KGGG) contribute to the substrate site. E105 functions as the Proton acceptor in the catalytic mechanism. K123 lines the substrate pocket.

Belongs to the ribose 5-phosphate isomerase family. As to quaternary structure, homodimer.

It catalyses the reaction aldehydo-D-ribose 5-phosphate = D-ribulose 5-phosphate. It functions in the pathway carbohydrate degradation; pentose phosphate pathway; D-ribose 5-phosphate from D-ribulose 5-phosphate (non-oxidative stage): step 1/1. Its function is as follows. Catalyzes the reversible conversion of ribose-5-phosphate to ribulose 5-phosphate. The protein is Ribose-5-phosphate isomerase A of Maricaulis maris (strain MCS10) (Caulobacter maris).